We begin with the raw amino-acid sequence, 1431 residues long: 1-phosphatidylinositol 4,5-bisphosphate phosphodiesterase beta egl-8 (1431 aa).

One can recognise a PI-PLC X-box domain in the interval 340-491 (MDMDQPLCHY…LRKKILIKNK (152 aa)). Residue histidine 355 is part of the active site. Positions 356, 385, and 387 each coordinate Ca(2+). Residue histidine 403 is part of the active site. Glutamate 437 contributes to the Ca(2+) binding site. Residues lysine 489 and lysine 491 each contribute to the substrate site. Disordered regions lie at residues 510-601 (KLDE…MVPD) and 632-692 (RRQS…SGPS). The span at 543–556 (EEVDDDTSDDDDDP) shows a compositional bias: acidic residues. 3 stretches are compositionally biased toward low complexity: residues 572–586 (NTTS…ARSS), 652–661 (SSSSPATPSI), and 668–692 (ATSS…SGPS). The PI-PLC Y-box domain occupies 758–874 (LSSLVNYTHP…GYLLKPDFLR (117 aa)). Serine 787 and arginine 814 together coordinate substrate. In terms of domain architecture, C2 spans 877–1002 (DRTFDPFSES…SLRSDTNQSF (126 aa)). Disordered regions lie at residues 1072–1119 (QPPR…VAVD), 1150–1176 (DLRK…SSIA), and 1188–1216 (NNRR…SASG). Residues 1074 to 1113 (PRQNGSSADLLANNGQTGSARGDQTSSMASSTIRSPNEQP) are compositionally biased toward polar residues. Residues 1135-1166 (KAFAKLLKRFQKELDDLRKKHQKQRDSIQKQQ) adopt a coiled-coil conformation. Basic and acidic residues predominate over residues 1150 to 1162 (DLRKKHQKQRDSI). The span at 1191–1200 (RSTKKEKGSR) shows a compositional bias: basic residues. Positions 1204-1216 (TASVSSGCGSASG) are enriched in low complexity. 2 coiled-coil regions span residues 1288–1318 (DEEE…KNQM) and 1368–1402 (EKNL…QLEQ).

It depends on Ca(2+) as a cofactor. As to expression, expressed in most or all neurons with high expression in the head and tail ganglia and low expression in the motor neurons of the ventral cord. Expressed in the intestine (at protein level). In males, expressed in vas deferens, spicule protractor muscles, diagonal muscles and a male-specific neuron.

It is found in the perikaryon. The protein localises to the cell projection. It localises to the axon. Its subcellular location is the synapse. The protein resides in the cell junction. It is found in the adherens junction. The enzyme catalyses a 1,2-diacyl-sn-glycero-3-phospho-(1D-myo-inositol-4,5-bisphosphate) + H2O = 1D-myo-inositol 1,4,5-trisphosphate + a 1,2-diacyl-sn-glycerol + H(+). Functionally, mediates the production of the second messenger molecules diacylglycerol (DAG) and inositol 1,4,5-trisphosphate (IP3) which plays an important role in the regulation of intracellular signaling cascades. Required in the nervous system to modulate neuronal activity. Facilitates synaptic transmission at neuromuscular junctions by regulating the release of acetylcholine from the motor neurons and thus affecting locomotion. Plays a role in efficient egg laying and defecation. Involved in axon regeneration after injury. Plays a role in male mating behavior by regulating spicule insertion and sperm transfer. By triggering Ca(2+) transient via IP3-mediated activation of IPR3 receptor itr-1 in ASH sensory neurons, regulates avoidance behavior in response to nose touch. By activating tpa-1 via DAG production, required for the expression of antimicrobial peptide nlp-29 in response to fungal infection. During embryogenesis, may play a role in epidermal morphogenesis together with plc-1. The polypeptide is 1-phosphatidylinositol 4,5-bisphosphate phosphodiesterase beta egl-8 (Caenorhabditis elegans).